The chain runs to 150 residues: Catabolic 3-dehydroquinase 2 (150 aa).

The active-site Proton acceptor is tyrosine 23. Substrate is bound by residues asparagine 74, histidine 80, and aspartate 87. Residue histidine 100 is the Proton donor of the active site. Residues 101–102 (IT) and arginine 111 each bind substrate.

It belongs to the type-II 3-dehydroquinase family. In terms of assembly, homododecamer. Adopts a ring-like structure, composed of an arrangement of two hexameric rings stacked on top of one another.

The enzyme catalyses 3-dehydroquinate = 3-dehydroshikimate + H2O. It participates in aromatic compound metabolism; 3,4-dihydroxybenzoate biosynthesis; 3,4-dihydroxybenzoate from 3-dehydroquinate: step 1/2. Is involved in the catabolism of quinate. Allows the utilization of quinate as carbon source via the beta-ketoadipate pathway. The sequence is that of Catabolic 3-dehydroquinase 2 from Aspergillus fumigatus (strain ATCC MYA-4609 / CBS 101355 / FGSC A1100 / Af293) (Neosartorya fumigata).